The primary structure comprises 41 residues: Large ribosomal subunit protein bL36 (41 aa).

The protein belongs to the bacterial ribosomal protein bL36 family.

This Cereibacter sphaeroides (strain ATCC 17029 / ATH 2.4.9) (Rhodobacter sphaeroides) protein is Large ribosomal subunit protein bL36.